We begin with the raw amino-acid sequence, 125 residues long: U-scoloptoxin(05)-Er1a (125 aa).

The first 20 residues, 1–20, serve as a signal peptide directing secretion; it reads MLSLGVSIFLLVFLIPENSG.

The protein belongs to the scoloptoxin-05 family. Post-translationally, contains 4 disulfide bonds. In terms of tissue distribution, expressed by the venom gland.

It is found in the secreted. This is U-scoloptoxin(05)-Er1a from Ethmostigmus rubripes (Giant centipede).